Reading from the N-terminus, the 320-residue chain is Beta-ketoacyl-[acyl-carrier-protein] synthase III (320 aa).

Residues Cys-114 and His-247 contribute to the active site. Residues 248 to 252 (QANRR) are ACP-binding. Asn-277 is a catalytic residue.

This sequence belongs to the thiolase-like superfamily. FabH family. Homodimer.

Its subcellular location is the cytoplasm. It carries out the reaction malonyl-[ACP] + acetyl-CoA + H(+) = 3-oxobutanoyl-[ACP] + CO2 + CoA. It functions in the pathway lipid metabolism; fatty acid biosynthesis. Catalyzes the condensation reaction of fatty acid synthesis by the addition to an acyl acceptor of two carbons from malonyl-ACP. Catalyzes the first condensation reaction which initiates fatty acid synthesis and may therefore play a role in governing the total rate of fatty acid production. Possesses both acetoacetyl-ACP synthase and acetyl transacylase activities. Its substrate specificity determines the biosynthesis of branched-chain and/or straight-chain of fatty acids. In Neisseria gonorrhoeae (strain ATCC 700825 / FA 1090), this protein is Beta-ketoacyl-[acyl-carrier-protein] synthase III.